An 865-amino-acid chain; its full sequence is Alanine--tRNA ligase (865 aa).

4 residues coordinate Zn(2+): His554, His558, Cys656, and His660.

Belongs to the class-II aminoacyl-tRNA synthetase family. Zn(2+) is required as a cofactor.

It is found in the cytoplasm. It catalyses the reaction tRNA(Ala) + L-alanine + ATP = L-alanyl-tRNA(Ala) + AMP + diphosphate. Its function is as follows. Catalyzes the attachment of alanine to tRNA(Ala) in a two-step reaction: alanine is first activated by ATP to form Ala-AMP and then transferred to the acceptor end of tRNA(Ala). Also edits incorrectly charged Ser-tRNA(Ala) and Gly-tRNA(Ala) via its editing domain. In Francisella tularensis subsp. tularensis (strain WY96-3418), this protein is Alanine--tRNA ligase.